The chain runs to 607 residues: Elongation factor 4 (607 aa).

Residues 11–193 (GKIRNFSIIA…QIVEKVPAPT (183 aa)) form the tr-type G domain. GTP contacts are provided by residues 23–28 (DHGKST) and 140–143 (NKID).

Belongs to the TRAFAC class translation factor GTPase superfamily. Classic translation factor GTPase family. LepA subfamily.

It localises to the cell membrane. It catalyses the reaction GTP + H2O = GDP + phosphate + H(+). Its function is as follows. Required for accurate and efficient protein synthesis under certain stress conditions. May act as a fidelity factor of the translation reaction, by catalyzing a one-codon backward translocation of tRNAs on improperly translocated ribosomes. Back-translocation proceeds from a post-translocation (POST) complex to a pre-translocation (PRE) complex, thus giving elongation factor G a second chance to translocate the tRNAs correctly. Binds to ribosomes in a GTP-dependent manner. In Streptococcus pneumoniae (strain Taiwan19F-14), this protein is Elongation factor 4.